Consider the following 523-residue polypeptide: Sensory neuron membrane protein 1 (523 aa).

Over 1–11 (MQLPRELKYAA) the chain is Cytoplasmic. The helical transmembrane segment at 12–32 (IAGGVALFGLIFGWVLFPTIL) threads the bilayer. The Extracellular segment spans residues 33 to 458 (KSQLKKEMAL…HQLFIPKRVV (426 aa)). An N-linked (GlcNAc...) asparagine glycan is attached at N229. 3 disulfide bridges follow: C268/C333, C297/C352, and C335/C341. N-linked (GlcNAc...) asparagine glycosylation is present at N440. Residues 459–479 (GVLRWWMVSFGSLGAVIGIVF) traverse the membrane as a helical segment. The Cytoplasmic segment spans residues 480–523 (HFRDHIMRLAVSGDTKVSKVIPEVEEQKDISVIGQAQEPAKVNI).

Belongs to the CD36 family.

The protein localises to the cell membrane. Plays an olfactory role that is not restricted to pheromone sensitivity. This chain is Sensory neuron membrane protein 1, found in Helicoverpa assulta (Oriental tobacco budworm).